We begin with the raw amino-acid sequence, 80 residues long: RNA-binding protein Hfq (80 aa).

Residues 10 to 69 (DPFLNLLRKEHVPVSIYLVNGIKLQGHIESFDQYVVLLRNTVTQMVYKHAISTVVPGRPV) form the Sm domain.

This sequence belongs to the Hfq family. In terms of assembly, homohexamer.

Its function is as follows. RNA chaperone that binds small regulatory RNA (sRNAs) and mRNAs to facilitate mRNA translational regulation in response to envelope stress, environmental stress and changes in metabolite concentrations. Also binds with high specificity to tRNAs. This Leptothrix cholodnii (strain ATCC 51168 / LMG 8142 / SP-6) (Leptothrix discophora (strain SP-6)) protein is RNA-binding protein Hfq.